A 728-amino-acid polypeptide reads, in one-letter code: Catalase-peroxidase 1 (728 aa).

Residues 1 to 22 (MDKTQSSQGKCPVMHGANSAVA) form the signal peptide. Residues 97–225 (WHSAGTYRVA…LAAVMMGLIY (129 aa)) constitute a cross-link (tryptophyl-tyrosyl-methioninium (Trp-Tyr) (with M-251)). Catalysis depends on His98, which acts as the Proton acceptor. The tryptophyl-tyrosyl-methioninium (Tyr-Met) (with W-97) cross-link spans 225–251 (YVNPEGVDGKPDPLRTAQDVRVTFARM). His266 lines the heme b pocket.

Belongs to the peroxidase family. Peroxidase/catalase subfamily. As to quaternary structure, homodimer or homotetramer. It depends on heme b as a cofactor. Post-translationally, formation of the three residue Trp-Tyr-Met cross-link is important for the catalase, but not the peroxidase activity of the enzyme.

The catalysed reaction is H2O2 + AH2 = A + 2 H2O. It catalyses the reaction 2 H2O2 = O2 + 2 H2O. Its function is as follows. Bifunctional enzyme with both catalase and broad-spectrum peroxidase activity. The chain is Catalase-peroxidase 1 from Shewanella sp. (strain ANA-3).